We begin with the raw amino-acid sequence, 403 residues long: Heptahelical transmembrane protein ADIPOR3 (403 aa).

Residues 1 to 73 are Cytoplasmic-facing; sequence MAAAAGEEVE…LSAFSIHNET (73 aa). The helical transmembrane segment at 74–94 threads the bilayer; it reads LNVWTHLIGFFIFLVLTIYTA. The Extracellular portion of the chain corresponds to 95–209; the sequence is TQVPNVVDLQ…QLIRPIPRWP (115 aa). Residues 210-230 form a helical membrane-spanning segment; it reads FYAFLGGAMFCLLASSTCHLL. The Cytoplasmic segment spans residues 231–246; the sequence is SCHSRRLAYIMLRLDY. Residues 247-267 form a helical membrane-spanning segment; that stretch reads AGIAALIATSFYPPVYYSFMC. The Extracellular segment spans residues 268 to 274; sequence YPFFCNL. Residues 275–295 traverse the membrane as a helical segment; sequence YLSCITILGVATIAFSLLPVF. Residues 296–306 are Cytoplasmic-facing; it reads QNPEFRTIRAC. A helical membrane pass occupies residues 307 to 327; sequence LFFGMGASGVIPVIHKLILFW. Residues 328–331 lie on the Extracellular side of the membrane; it reads HQPE. A helical membrane pass occupies residues 332–352; the sequence is ALHTTAYEVLMGLFYGIGALV. The Cytoplasmic portion of the chain corresponds to 353 to 374; the sequence is YATRVPERWMPGKFDIAGHSHQ. The helical transmembrane segment at 375-395 threads the bilayer; the sequence is LFHVLVVAGAYTHYHSGLVYL. Residues 396–403 are Extracellular-facing; that stretch reads KWRDVQGC.

Belongs to the ADIPOR family.

It localises to the membrane. In terms of biological role, may play a role in abiotic stress response. The protein is Heptahelical transmembrane protein ADIPOR3 (ADIPOR3) of Oryza sativa subsp. japonica (Rice).